The following is a 364-amino-acid chain: DNA polymerase IV (364 aa).

A UmuC domain is found at 14–198 (IIHIDMDAFF…LPIEKFHGVG (185 aa)). Mg(2+) contacts are provided by aspartate 18 and aspartate 116. Residue glutamate 117 is part of the active site.

Belongs to the DNA polymerase type-Y family. In terms of assembly, monomer. It depends on Mg(2+) as a cofactor.

The protein localises to the cytoplasm. The catalysed reaction is DNA(n) + a 2'-deoxyribonucleoside 5'-triphosphate = DNA(n+1) + diphosphate. Poorly processive, error-prone DNA polymerase involved in untargeted mutagenesis. Copies undamaged DNA at stalled replication forks, which arise in vivo from mismatched or misaligned primer ends. These misaligned primers can be extended by PolIV. Exhibits no 3'-5' exonuclease (proofreading) activity. May be involved in translesional synthesis, in conjunction with the beta clamp from PolIII. This is DNA polymerase IV from Streptococcus pyogenes serotype M1.